The chain runs to 138 residues: Putative pre-16S rRNA nuclease (138 aa).

Belongs to the YqgF nuclease family.

The protein localises to the cytoplasm. In terms of biological role, could be a nuclease involved in processing of the 5'-end of pre-16S rRNA. This chain is Putative pre-16S rRNA nuclease, found in Porphyromonas gingivalis (strain ATCC BAA-308 / W83).